The sequence spans 156 residues: Small ribosomal subunit protein uS7 (156 aa).

Belongs to the universal ribosomal protein uS7 family. As to quaternary structure, part of the 30S ribosomal subunit. Contacts proteins S9 and S11.

In terms of biological role, one of the primary rRNA binding proteins, it binds directly to 16S rRNA where it nucleates assembly of the head domain of the 30S subunit. Is located at the subunit interface close to the decoding center, probably blocks exit of the E-site tRNA. This is Small ribosomal subunit protein uS7 from Nitratiruptor sp. (strain SB155-2).